A 354-amino-acid polypeptide reads, in one-letter code: Serum paraoxonase/arylesterase 2 (354 aa).

A glycan (N-linked (GlcNAc...) asparagine) is linked at Asn-29. The cysteines at positions 42 and 352 are disulfide-linked. The Ca(2+) site is built by Glu-53 and Asp-54. His-114 (proton acceptor) is an active-site residue. Ile-116, Asn-167, Asp-168, and Asn-223 together coordinate Ca(2+). Asn-254 carries N-linked (GlcNAc...) asparagine glycosylation. The Ca(2+) site is built by Asp-268 and Asn-269. 2 N-linked (GlcNAc...) asparagine glycosylation sites follow: Asn-269 and Asn-323.

Belongs to the paraoxonase family. It depends on Ca(2+) as a cofactor. In terms of processing, glycosylated. Post-translationally, the signal sequence is not cleaved.

The protein resides in the membrane. The catalysed reaction is a phenyl acetate + H2O = a phenol + acetate + H(+). It carries out the reaction An aryl dialkyl phosphate + H2O = dialkyl phosphate + an aryl alcohol.. Functionally, the absence of paraoxonase activity in turkey and chicken blood and in turkey liver indicates that PON2, if expressed, does not hydrolyze paraoxon. The sequence is that of Serum paraoxonase/arylesterase 2 (PON2) from Gallus gallus (Chicken).